We begin with the raw amino-acid sequence, 602 residues long: Probable translation initiation factor IF-2 (602 aa).

Positions 15-230 constitute a tr-type G domain; it reads LRTPIVAVLG…VLMGLSQRYL (216 aa). The segment at 24–31 is G1; the sequence is GHVDHGKT. Residue 24-31 participates in GTP binding; that stretch reads GHVDHGKT. The tract at residues 49–53 is G2; sequence AITQH. The segment at 86-89 is G3; it reads DTPG. GTP is bound by residues 86-90 and 140-143; these read DTPGH and NKID. Positions 140-143 are G4; that stretch reads NKID. The segment at 208 to 210 is G5; the sequence is SAE.

The protein belongs to the TRAFAC class translation factor GTPase superfamily. Classic translation factor GTPase family. IF-2 subfamily.

Its function is as follows. Function in general translation initiation by promoting the binding of the formylmethionine-tRNA to ribosomes. Seems to function along with eIF-2. This chain is Probable translation initiation factor IF-2, found in Natronomonas pharaonis (strain ATCC 35678 / DSM 2160 / CIP 103997 / JCM 8858 / NBRC 14720 / NCIMB 2260 / Gabara) (Halobacterium pharaonis).